Here is a 248-residue protein sequence, read N- to C-terminus: 2,3-bisphosphoglycerate-dependent phosphoglycerate mutase (248 aa).

Substrate contacts are provided by residues 8–15 and R58; that span reads RHGESGWN. The Tele-phosphohistidine intermediate role is filled by H9. The segment at 82–101 is disordered; the sequence is GTGEDRTEREDGSRKDRKEK. The active-site Proton donor/acceptor is E124. Substrate contacts are provided by residues 124 to 127 and K135; that span reads ERYY.

The protein belongs to the phosphoglycerate mutase family. BPG-dependent PGAM subfamily.

The catalysed reaction is (2R)-2-phosphoglycerate = (2R)-3-phosphoglycerate. It participates in carbohydrate degradation; glycolysis; pyruvate from D-glyceraldehyde 3-phosphate: step 3/5. In terms of biological role, catalyzes the interconversion of 2-phosphoglycerate and 3-phosphoglycerate. This chain is 2,3-bisphosphoglycerate-dependent phosphoglycerate mutase, found in Methanosarcina acetivorans (strain ATCC 35395 / DSM 2834 / JCM 12185 / C2A).